Reading from the N-terminus, the 166-residue chain is Ribosome maturation factor RimM (166 aa).

One can recognise a PRC barrel domain in the interval 91–163; the sequence is EDEFYEFQLI…KMQITPPEGW (73 aa).

This sequence belongs to the RimM family. As to quaternary structure, binds ribosomal protein uS19.

Its subcellular location is the cytoplasm. Its function is as follows. An accessory protein needed during the final step in the assembly of 30S ribosomal subunit, possibly for assembly of the head region. Essential for efficient processing of 16S rRNA. May be needed both before and after RbfA during the maturation of 16S rRNA. It has affinity for free ribosomal 30S subunits but not for 70S ribosomes. This chain is Ribosome maturation factor RimM, found in Sulfurihydrogenibium sp. (strain YO3AOP1).